The following is a 205-amino-acid chain: MSDIKLNYHKTHFLTSAPDIRALPEDSGIEIAFAGRSNAGKSTALNALTNQKSLARTSKTPGRTQLINLFEVEPQCRLVDLPGYGYAAVPEQMKIQWQKALGEYLQKRQCLAGVVILMDIRHPLKDLDQQMIEWAVASELPVLLLLTKADKLSQSARSKQVKMVREAILPFQGDVQVEAFSALNKTGIDRLAAKLDSWFAPVLSE.

Residues 27–201 (SGIEIAFAGR…AAKLDSWFAP (175 aa)) form the EngB-type G domain. GTP is bound by residues 35–42 (GRSNAGKS), 62–66 (GRTQL), 80–83 (DLPG), 147–150 (TKAD), and 180–182 (FSA). Mg(2+) is bound by residues Ser-42 and Thr-64.

This sequence belongs to the TRAFAC class TrmE-Era-EngA-EngB-Septin-like GTPase superfamily. EngB GTPase family. It depends on Mg(2+) as a cofactor.

In terms of biological role, necessary for normal cell division and for the maintenance of normal septation. The protein is Probable GTP-binding protein EngB of Pasteurella multocida (strain Pm70).